The primary structure comprises 306 residues: Curved DNA-binding protein (306 aa).

The J domain maps to aspartate 5 to tryptophan 69.

It localises to the cytoplasm. Its subcellular location is the nucleoid. DNA-binding protein that preferentially recognizes a curved DNA sequence. It is probably a functional analog of DnaJ; displays overlapping activities with DnaJ, but functions under different conditions, probably acting as a molecular chaperone in an adaptive response to environmental stresses other than heat shock. Lacks autonomous chaperone activity; binds native substrates and targets them for recognition by DnaK. Its activity is inhibited by the binding of CbpM. This Escherichia fergusonii (strain ATCC 35469 / DSM 13698 / CCUG 18766 / IAM 14443 / JCM 21226 / LMG 7866 / NBRC 102419 / NCTC 12128 / CDC 0568-73) protein is Curved DNA-binding protein.